The following is a 575-amino-acid chain: Transcription factor COE2 (575 aa).

The interval 62-65 (RKSN) is interaction with DNA. The C5-type zinc-finger motif lies at 150–169 (CRVLLTHEVMCSRCCEKKSC). 2 interaction with DNA regions span residues 196 to 203 (NCLKTAGN) and 235 to 238 (NNSK). In terms of domain architecture, IPT/TIG spans 253 to 336 (PCIKAISPSE…KGAPGRFIYT (84 aa)). Residues 441–453 (STQGNNQGYIRNT) are compositionally biased toward polar residues. Residues 441 to 479 (STQGNNQGYIRNTSSISPRGYSSSSTPQQSNYSTSSNSM) form a disordered region. Residues 454 to 479 (SSISPRGYSSSSTPQQSNYSTSSNSM) show a composition bias toward low complexity.

It belongs to the COE family. In terms of assembly, forms either a homodimer or a heterodimer with a related family member. Interacts with SIX1. As to expression, in adult expressed in olfactory epithelium and at a much lower level in Purkinje cells of the cerebellum. In embryo expressed in epithalamus, in cells near the ventricular zone of mesencephalon and on the ventral surface of rhombencephalon, in the developing vomeronasal organ, at a lower level in developing spinal cord. Not expressed in developing retina, inner ear, dorsal root ganglia, trigeminal ganglia and glossopharyngeal ganglia.

The protein resides in the nucleus. Transcription factor that, in osteoblasts, activates the decoy receptor for RANKL, TNFRSF11B, which in turn regulates osteoclast differentiation. Acts in synergy with the Wnt-responsive LEF1/CTNNB1 pathway. Recognizes variations of the palindromic sequence 5'-ATTCCCNNGGGAATT-3'. The sequence is that of Transcription factor COE2 (Ebf2) from Mus musculus (Mouse).